The following is a 401-amino-acid chain: Riboflavin biosynthesis protein RibBA (401 aa).

The tract at residues 1–203 (MTDFQFSKVE…IQQLQEYRRK (203 aa)) is DHBP synthase. Residues 30–31 (RE), Asp-35, 142–146 (RNGHT), and Glu-166 contribute to the D-ribulose 5-phosphate site. Glu-31 contributes to the Mg(2+) binding site. Residue His-145 coordinates Mg(2+). Positions 204-401 (HDSLVKQISV…QIKMGHMFNF (198 aa)) are GTP cyclohydrolase II. GTP is bound at residue 254-258 (RIHSE). Zn(2+)-binding residues include Cys-259, Cys-270, and Cys-272. GTP contacts are provided by residues Gln-275, 297–299 (EGR), and Thr-319. Asp-331 serves as the catalytic Proton acceptor; for GTP cyclohydrolase activity. Arg-333 (nucleophile; for GTP cyclohydrolase activity) is an active-site residue. Positions 354 and 359 each coordinate GTP.

It in the N-terminal section; belongs to the DHBP synthase family. This sequence in the C-terminal section; belongs to the GTP cyclohydrolase II family. Mg(2+) is required as a cofactor. Requires Mn(2+) as cofactor. Zn(2+) serves as cofactor.

The catalysed reaction is D-ribulose 5-phosphate = (2S)-2-hydroxy-3-oxobutyl phosphate + formate + H(+). It catalyses the reaction GTP + 4 H2O = 2,5-diamino-6-hydroxy-4-(5-phosphoribosylamino)-pyrimidine + formate + 2 phosphate + 3 H(+). The protein operates within cofactor biosynthesis; riboflavin biosynthesis; 2-hydroxy-3-oxobutyl phosphate from D-ribulose 5-phosphate: step 1/1. It participates in cofactor biosynthesis; riboflavin biosynthesis; 5-amino-6-(D-ribitylamino)uracil from GTP: step 1/4. Catalyzes the conversion of D-ribulose 5-phosphate to formate and 3,4-dihydroxy-2-butanone 4-phosphate. Its function is as follows. Catalyzes the conversion of GTP to 2,5-diamino-6-ribosylamino-4(3H)-pyrimidinone 5'-phosphate (DARP), formate and pyrophosphate. The sequence is that of Riboflavin biosynthesis protein RibBA from Actinobacillus pleuropneumoniae serotype 3 (strain JL03).